The sequence spans 357 residues: MSGPSSWRRAATVMLAAGWSHASPAGFRLLLLQRAQNQRFMPGAHVFPGGVLDAADSSPDWVSLFAPRHTPPRFGLGPEPPRQPSFPGLFHGDADGAALPDDVALRICAIRETFEEAGVLLLRPRDSARASQEPSIALSPPAGLADWRSRVRSDPRCFLQLCAHLDCTPDIWALHDWGGWLTPYGRSSRRFDTTFLLCCLRETPRVEPDLAEVVGYKWLSPSEATECFLSKEIWLAPPQFYEVRRLENFASLSALYRFCLDHPLEVPEKWLPIVLLTSDGSIHLLPGDELYVKGSDFLEKNMSIDKKTEEIVTEGKVVNRIVIHSPHLYEIYMTLTSKSEHGYPKSYTAKKSCTARL.

A Nudix hydrolase domain is found at 10–242; the sequence is AATVMLAAGW…IWLAPPQFYE (233 aa). Positions 97–118 match the Nudix box motif; it reads AALPDDVALRICAIRETFEEAG. Glutamate 112 and glutamate 116 together coordinate Mg(2+). An N6-succinyllysine modification is found at lysine 300. The short motif at 355–357 is the Microbody targeting signal element; sequence ARL.

This sequence belongs to the Nudix hydrolase family. In terms of assembly, monomer. It depends on Mg(2+) as a cofactor. Mn(2+) serves as cofactor.

It is found in the peroxisome. It carries out the reaction an acyl-CoA + H2O = an acyl-4'-phosphopantetheine + adenosine 3',5'-bisphosphate + 2 H(+). The enzyme catalyses CoA + H2O = (R)-4'-phosphopantetheine + adenosine 3',5'-bisphosphate + 2 H(+). It catalyses the reaction hexanoyl-CoA + H2O = hexanoyl-4'-phosphopantetheine + adenosine 3',5'-bisphosphate + 2 H(+). The catalysed reaction is octanoyl-CoA + H2O = S-octanoyl-4'-phosphopantetheine + adenosine 3',5'-bisphosphate + 2 H(+). It carries out the reaction butanoyl-CoA + H2O = S-butanoyl-4'-phosphopantetheine + adenosine 3',5'-bisphosphate + 2 H(+). The enzyme catalyses propanoyl-CoA + H2O = propanoyl-4'-phosphopantetheine + adenosine 3',5'-bisphosphate + 2 H(+). It catalyses the reaction malonyl-CoA + H2O = malonyl-4'-phosphopantetheine + adenosine 3',5'-bisphosphate + 2 H(+). The catalysed reaction is succinyl-CoA + H2O = succinyl-4'-phosphopantetheine + adenosine 3',5'-bisphosphate + 2 H(+). It carries out the reaction choloyl-CoA + H2O = S-choloyl-4'-phosphopantetheine + adenosine 3',5'-bisphosphate + 2 H(+). The enzyme catalyses 4,8-dimethylnonanoyl-CoA + H2O = S-(4,8-dimethylnonanoyl)-4'-phosphopantetheine + adenosine 3',5'-bisphosphate + 2 H(+). It catalyses the reaction (9Z,12Z,15Z)-octadecatrienoyl-CoA + H2O = S-(9Z,12Z,15Z-octadecatrienoyl)-4'-phosphopantetheine + adenosine 3',5'-bisphosphate + 2 H(+). The catalysed reaction is (9Z,12Z)-octadecadienoyl-CoA + H2O = S-(9Z,12Z-octadecadienoyl)-4'-phosphopantetheine + adenosine 3',5'-bisphosphate + 2 H(+). It carries out the reaction (9Z)-hexadecenoyl-CoA + H2O = S-(9Z-hexadecenoyl)-4'-phosphopantetheine + adenosine 3',5'-bisphosphate + 2 H(+). The enzyme catalyses (9Z)-tetradecenoyl-CoA + H2O = S-(9Z-tetradecenoyl)-4'-phosphopantetheine + adenosine 3',5'-bisphosphate + 2 H(+). It catalyses the reaction (6Z)-octenoyl-CoA + H2O = S-(6Z-octenoyl)-4'-phosphopantetheine + adenosine 3',5'-bisphosphate + 2 H(+). The catalysed reaction is hexadecanoyl-CoA + H2O = S-hexadecanoyl-4'-phosphopantetheine + adenosine 3',5'-bisphosphate + 2 H(+). It carries out the reaction tetradecanoyl-CoA + H2O = tetradecanoyl-4'-phosphopantetheine + adenosine 3',5'-bisphosphate + 2 H(+). The enzyme catalyses dodecanoyl-CoA + H2O = S-dodecanoyl-4'-phosphopantetheine + adenosine 3',5'-bisphosphate + 2 H(+). It catalyses the reaction a 5'-end CoA-ribonucleoside in mRNA + H2O = a 5'-end phospho-adenosine-phospho-ribonucleoside in mRNA + (R)-4'-phosphopantetheine + 2 H(+). Fatty acyl-coenzyme A (CoA) diphosphatase that hydrolyzes fatty acyl-CoA to yield acyl-4'-phosphopantetheine and adenosine 3',5'-bisphosphate. Mediates the hydrolysis of a wide range of CoA esters, including choloyl-CoA and branched-chain fatty-acyl-CoA esters and at low substrate concentrations medium and long-chain fatty-acyl-CoA esters are the primary substrates. Highest activity seen with medium-chain acyl-CoA esters and higher rates of activity seen with the unsaturated acyl-CoA esters compared with the saturated esters. Exhibits decapping activity towards dpCoA-capped RNAs in vitro. This is Acyl-coenzyme A diphosphatase NUDT19 (Nudt19) from Rattus norvegicus (Rat).